Consider the following 391-residue polypeptide: MMITKQSYQKFALMRVFVFSLSAFIFNTTEFVPVALLSDIAKSFEMESATVGLMITAYAWVVSLGSLPLMLLSAKIERKRLLLFLFALFIASHILSALAWNFWVLLISRIGIAFAHSIFWSITASLVIRVAPRNKKQQALGLLALGSSLAMILGLPLGRIIGQMLDWRSTFGVIGGVATLIALLMWKLLPPLPSRNAGTLASVPILMKRPLLMGIYLLVIMVISGHFTTYSYIEPFIIQISQFSPDITTLMLFVFGLAGVAGSFLFGRLYAKNSRKFIAFAMILVICPQLLLFVFKNLEWVIFLQIFLWGIGITSLTIALQMRVLQLAPDATDVASAIFSGSYNVGIGSGALFGSIVIHQLGLGYIGFVGGALGLLALFWLRFITIKFKKT.

The next 12 helical transmembrane spans lie at 16 to 36 (VFVF…PVAL), 51 to 71 (VGLM…PLML), 82 to 102 (LLFL…AWNF), 103 to 123 (WVLL…WSIT), 138 to 158 (QALG…LPLG), 171 to 191 (FGVI…LLPP), 210 to 230 (PLLM…FTTY), 247 to 267 (ITTL…FLFG), 277 to 297 (FIAF…VFKN), 300 to 320 (WVIF…TIAL), 338 to 358 (IFSG…SIVI), and 361 to 381 (LGLG…LFWL).

It belongs to the major facilitator superfamily. SotB (TC 2.A.1.2) family.

The protein resides in the cell inner membrane. Functionally, involved in the efflux of sugars. The physiological role may be the reduction of the intracellular concentration of toxic sugars or sugar metabolites. In Helicobacter pylori (strain G27), this protein is Probable sugar efflux transporter.